We begin with the raw amino-acid sequence, 495 residues long: Cysteine--tRNA ligase (495 aa).

Cysteine 29 lines the Zn(2+) pocket. A 'HIGH' region motif is present at residues 31 to 41 (PTVYDYGHIGN). Cysteine 211, histidine 236, and glutamate 240 together coordinate Zn(2+). The short motif at 268-272 (KMSKS) is the 'KMSKS' region element. ATP is bound at residue lysine 271.

Belongs to the class-I aminoacyl-tRNA synthetase family. Monomer. The cofactor is Zn(2+).

The protein localises to the cytoplasm. The catalysed reaction is tRNA(Cys) + L-cysteine + ATP = L-cysteinyl-tRNA(Cys) + AMP + diphosphate. This Koribacter versatilis (strain Ellin345) protein is Cysteine--tRNA ligase.